The chain runs to 132 residues: UPF0299 membrane protein YohJ (132 aa).

The next 4 helical transmembrane spans lie at 5-25 (LNIIWQYLRAFVLIYACLYAG), 26-46 (IFIASLLPVTIPGSIIGMLIL), 63-83 (GCYVLIRYMALLFVPIGVGVM), and 93-113 (FGPVVVSCAVSTLVVFLVVSW).

This sequence belongs to the UPF0299 family.

The protein localises to the cell inner membrane. The chain is UPF0299 membrane protein YohJ from Shigella flexneri serotype 5b (strain 8401).